Consider the following 269-residue polypeptide: RBPJ-interacting and tubulin-associated protein 1 (269 aa).

A Nuclear export signal motif is present at residues 5 to 17 (VELAISGMQTLHV). Disordered regions lie at residues 67–94 (GTGVSQALGANGSCESTSSSGSTPTLTP) and 145–269 (PATP…PPWK). A compositionally biased stretch (low complexity) spans 79–93 (SCESTSSSGSTPTLT). Residues 92–108 (LTPRKKNKYRLISHTPS) carry the Nuclear localization signal motif. The segment at 128–156 (WMARGDAAKLHALFWTPPATPRGSHSPRP) is interaction with RBPJ/RBPSUH. The segment at 156–269 (PRETPVRCVH…ATQKTKPPWK (114 aa)) is interaction with tubulin. 2 stretches are compositionally biased toward polar residues: residues 202–220 (LTHPNVPSTGHTPASSPCT) and 247–269 (VSVSVPTTPRQGGATQKTKPPWK).

It belongs to the RITA family. As to quaternary structure, interacts with RBPJ/RBPSUH.

It localises to the cytoplasm. The protein localises to the nucleus. The protein resides in the cytoskeleton. It is found in the microtubule organizing center. Its subcellular location is the centrosome. In terms of biological role, tubulin-binding protein that acts as a negative regulator of Notch signaling pathway. Shuttles between the cytoplasm and the nucleus and mediates the nuclear export of RBPJ/RBPSUH, thereby preventing the interaction between RBPJ/RBPSUH and NICD product of Notch proteins (Notch intracellular domain), leading to down-regulate Notch-mediated transcription. May play a role in neurogenesis. This Bos taurus (Bovine) protein is RBPJ-interacting and tubulin-associated protein 1 (RITA1).